The sequence spans 202 residues: Matrix protein (202 aa).

A PPXY motif motif is present at residues 35 to 38; the sequence is PPES. Residues 115-151 are essential for glycoprotein binding; sequence KIRRTLVFQWAESRGPLDGEELEYSQEITWDDDSEFI.

Belongs to the lyssavirus matrix protein family. As to quaternary structure, homomultimer. Interacts with nucleoprotein and with the cytoplasmic domain of glycoprotein.

Its subcellular location is the virion membrane. It localises to the host endomembrane system. Its function is as follows. Plays a major role in assembly and budding of virion. Completely covers the ribonucleoprotein coil and keep it in condensed bullet-shaped form. Inhibits viral transcription and stimulates replication. Plays a major role in early induction of TRAIL-mediated apoptosis in infected neurons. This is Matrix protein (M) from Myotis mystacinus (Whiskered bat).